Reading from the N-terminus, the 232-residue chain is Ribose-5-phosphate isomerase A (232 aa).

Substrate-binding positions include 28–31 (TGST), 83–86 (DGAD), and 96–99 (KGGG). Catalysis depends on glutamate 105, which acts as the Proton acceptor. Position 123 (lysine 123) interacts with substrate.

Belongs to the ribose 5-phosphate isomerase family. As to quaternary structure, homodimer.

It carries out the reaction aldehydo-D-ribose 5-phosphate = D-ribulose 5-phosphate. Its pathway is carbohydrate degradation; pentose phosphate pathway; D-ribose 5-phosphate from D-ribulose 5-phosphate (non-oxidative stage): step 1/1. Catalyzes the reversible conversion of ribose-5-phosphate to ribulose 5-phosphate. The sequence is that of Ribose-5-phosphate isomerase A from Nitrobacter hamburgensis (strain DSM 10229 / NCIMB 13809 / X14).